The primary structure comprises 279 residues: MLIIELLKALFLGVVEGVTEWLPVSSTGHLILVQEFMKLNQSKSFVEMFNIVIQLGAIMAVIVIYFKRLNPFQPGKSAREIRLTWQLWLKVVIACIPSILIALPFDNWFEAHFNFMIPIAIALIFYGFVFIWVEKRNAHLKPQVTELASMSYKTAFLIGCFQVLSIVPGTSRSGATILGAIIIGTSRSVAADFTFFLAIPTMFGYSGLKAVKYFLDGNVLSLDQSLILLVASLTAFVVSLYVIRFLTDYVKRHDFTIFGKYRIVLGSLLILYWLVVHLF.

The next 6 membrane-spanning stretches (helical) occupy residues 45 to 65 (FVEM…IVIY), 85 to 105 (WQLW…ALPF), 113 to 133 (FNFM…FIWV), 188 to 208 (SVAA…YSGL), 226 to 246 (LILL…IRFL), and 255 to 275 (FTIF…YWLV).

It belongs to the UppP family.

The protein localises to the cell membrane. The enzyme catalyses di-trans,octa-cis-undecaprenyl diphosphate + H2O = di-trans,octa-cis-undecaprenyl phosphate + phosphate + H(+). Catalyzes the dephosphorylation of undecaprenyl diphosphate (UPP). Confers resistance to bacitracin. This chain is Undecaprenyl-diphosphatase, found in Streptococcus agalactiae serotype III (strain NEM316).